We begin with the raw amino-acid sequence, 482 residues long: Wax ester synthase/diacylglycerol acyltransferase 9 (482 aa).

At 1–195 (MEKKMKEEEE…FRLVLVVCST (195 aa)) the chain is on the cytoplasmic side. Residue H140 is the Proton acceptor of the active site. A helical membrane pass occupies residues 196–216 (VRLIWNTLVDSFLCMATIFFL). Over 217–328 (KDTDTPLKGK…AKGSKCRWGN (112 aa)) the chain is Lumenal. The chain crosses the membrane as a helical span at residues 329 to 349 (YISVILFPFTIALQSDPLVYL). Residues 350-366 (SNVKSMIDRKKNSLITY) are Cytoplasmic-facing. The chain crosses the membrane as a helical span at residues 367-387 (IIYTFSEFVIKAFGINVAVAF). The Lumenal portion of the chain corresponds to 388 to 482 (QRKIMLNTTM…LEKGLPNHVN (95 aa)). N394 carries an N-linked (GlcNAc...) asparagine glycan.

In the N-terminal section; belongs to the long-chain O-acyltransferase family. As to expression, mostly expressed in stems and siliques.

It is found in the cell membrane. Its subcellular location is the endoplasmic reticulum membrane. The enzyme catalyses an acyl-CoA + a 1,2-diacyl-sn-glycerol = a triacyl-sn-glycerol + CoA. It catalyses the reaction a long chain fatty alcohol + a fatty acyl-CoA = a wax ester + CoA. The protein operates within glycerolipid metabolism; triacylglycerol biosynthesis. It functions in the pathway lipid metabolism. Functionally, bifunctional wax ester synthase/diacylglycerol acyltransferase. Involved in cuticular wax biosynthesis. The protein is Wax ester synthase/diacylglycerol acyltransferase 9 of Arabidopsis thaliana (Mouse-ear cress).